The following is a 502-amino-acid chain: TNF receptor-associated factor family protein DDB_G0268444 (502 aa).

An RING-type; degenerate zinc finger spans residues 28-68; it reads CSICYESVYKKEIYQCKEIHWFCKTCWAESLFKKKECMICR. 2 consecutive TRAF-type zinc fingers follow at residues 129 to 183 and 185 to 243; these read KHLK…SRSL and NHYK…PKSN. The stretch at 261-295 forms a coiled coil; sequence IESQSLQIKETNIKYENLLNKINKLEQLETESKCD. The region spanning 368-489 is the MATH domain; that stretch reads KYKNRWSISN…DDSLVIDFSI (122 aa).

The protein belongs to the TNF receptor-associated factor family. A subfamily.

The protein localises to the cytoplasm. Probable adapter protein and signal transducer that links members of the tumor necrosis factor receptor family to different signaling pathways by association with the receptor cytoplasmic domain and kinases. The protein is TNF receptor-associated factor family protein DDB_G0268444 of Dictyostelium discoideum (Social amoeba).